The following is a 376-amino-acid chain: tRNA-specific 2-thiouridylase MnmA (376 aa).

ATP contacts are provided by residues 17-24 (GMSGGVDS) and Met43. The segment at 103-105 (NPD) is interaction with target base in tRNA. Residue Cys108 is the Nucleophile of the active site. Cys108 and Cys204 are disulfide-bonded. Gly132 is a binding site for ATP. The tract at residues 154 to 156 (KDQ) is interaction with tRNA. The active-site Cysteine persulfide intermediate is the Cys204. The interval 316 to 317 (RY) is interaction with tRNA.

Belongs to the MnmA/TRMU family.

Its subcellular location is the cytoplasm. The catalysed reaction is S-sulfanyl-L-cysteinyl-[protein] + uridine(34) in tRNA + AH2 + ATP = 2-thiouridine(34) in tRNA + L-cysteinyl-[protein] + A + AMP + diphosphate + H(+). Functionally, catalyzes the 2-thiolation of uridine at the wobble position (U34) of tRNA, leading to the formation of s(2)U34. The polypeptide is tRNA-specific 2-thiouridylase MnmA (Pseudomonas syringae pv. syringae (strain B728a)).